Reading from the N-terminus, the 143-residue chain is Histone H2AX (143 aa).

The disordered stretch occupies residues 1 to 22; that stretch reads MSGRGKTGGKARAKAKSRSSRA. Position 2 is an N-acetylserine (Ser2). Position 2 is a phosphoserine (Ser2). 2 positions are modified to N6-acetyllysine: Lys6 and Lys10. The span at 7–19 shows a compositional bias: basic residues; that stretch reads TGGKARAKAKSRS. Position 10 is an N6-lactoyllysine; alternate (Lys10). Glycyl lysine isopeptide (Lys-Gly) (interchain with G-Cter in ubiquitin) cross-links involve residues Lys14 and Lys16. Lys37 carries the post-translational modification N6-acetyllysine; by CREBBP and EP300. Lys120 participates in a covalent cross-link: Glycyl lysine isopeptide (Lys-Gly) (interchain with G-Cter in ubiquitin). A phosphoserine mark is found at Ser121 and Ser122. Positions 121–143 are disordered; the sequence is SSATVGPKAPAVGKKASQASQEY. Residues Lys128 and Lys135 each participate in a glycyl lysine isopeptide (Lys-Gly) (interchain with G-Cter in SUMO2) cross-link. Phosphoserine is present on Ser137. Position 140 is a phosphoserine; by ATM, ATR and PRKDC (Ser140). A [ST]-Q motif motif is present at residues 140–141; the sequence is SQ. Tyr143 is subject to Phosphotyrosine; by WSTF.

This sequence belongs to the histone H2A family. As to quaternary structure, the nucleosome is a histone octamer containing two molecules each of H2A, H2B, H3 and H4 assembled in one H3-H4 heterotetramer and two H2A-H2B heterodimers. The octamer wraps approximately 147 bp of DNA. Interacts with numerous proteins required for DNA damage signaling and repair when phosphorylated on Ser-140. These include MDC1, BRCA1 and the MRN complex, composed of MRE11, RAD50, and NBN. Interaction with the MRN complex is mediated at least in part by NBN. Also interacts with DHX9/NDHII when phosphorylated on Ser-140 and MCPH1 when phosphorylated at Ser-140 or Tyr-143. Interacts with ARRB2; the interaction is detected in the nucleus upon OR1D2 stimulation. Interacts with WRAP53/TCAB1. Interacts with TP53BP1. Interacts with HDGFL2. Post-translationally, phosphorylated on Ser-140 (to form gamma-H2AX or H2AX139ph) in response to DNA double strand breaks (DSBs) generated by exogenous genotoxic agents, by stalled replication forks, by meiotic recombination events and during immunoglobulin class switching in lymphocytes. Phosphorylation can extend up to several thousand nucleosomes from the actual site of the DSB and may mark the surrounding chromatin for recruitment of proteins required for DNA damage signaling and repair. Widespread phosphorylation may also serve to amplify the damage signal or aid repair of persistent lesions. Phosphorylation of Ser-140 (H2AX139ph) in response to ionizing radiation is mediated by both ATM and PRKDC while defects in DNA replication induce Ser-140 phosphorylation (H2AX139ph) subsequent to activation of ATR and PRKDC. Dephosphorylation of Ser-140 by PP2A is required for DNA DSB repair. In meiosis, Ser-140 phosphorylation (H2AX139ph) first occurs at synaptonemal complexes during leptotene and is an ATM-dependent response to the formation of programmed DSBs by SPO11. Ser-140 phosphorylation (H2AX139ph) subsequently occurs at unsynapsed regions of both autosomes and the XY bivalent during zygotene and is ATR- and BRCA1-dependent. Ser-140 phosphorylation (H2AX139ph) may also be required for transcriptional repression of unsynapsed chromatin and meiotic sex chromosome inactivation (MSCI), whereby the X and Y chromosomes condense in pachytene to form the heterochromatic XY-body. During immunoglobulin class switch recombination in lymphocytes, Ser-140 phosphorylation (H2AX139ph) at sites of DNA-recombination requires the activation-induced cytidine deaminase AICDA. Phosphorylation at Tyr-143 (H2AXY142ph) by BAZ1B/WSTF determines the relative recruitment of either DNA repair or pro-apoptotic factors. Phosphorylation at Tyr-143 (H2AXY142ph) favors the recruitment of APBB1/FE65 and pro-apoptosis factors such as MAPK8/JNK1, triggering apoptosis. In contrast, dephosphorylation of Tyr-143 by EYA proteins (EYA1, EYA2, EYA3 or EYA4) favors the recruitment of MDC1-containing DNA repair complexes to the tail of phosphorylated Ser-140 (H2AX139ph). Phosphorylated by VRK1. Monoubiquitination of Lys-120 (H2AXK119ub) by RING1 and RNF2/RING2 complex gives a specific tag for epigenetic transcriptional repression. Following DNA double-strand breaks (DSBs), it is ubiquitinated through 'Lys-63' linkage of ubiquitin moieties by the E2 ligase UBE2N and the E3 ligases RNF8 and RNF168, leading to the recruitment of repair proteins to sites of DNA damage. Ubiquitination at Lys-14 and Lys-16 (H2AK13Ub and H2AK15Ub, respectively) in response to DNA damage is initiated by RNF168 that mediates monoubiquitination at these 2 sites, and 'Lys-63'-linked ubiquitin are then conjugated to monoubiquitin; RNF8 is able to extend 'Lys-63'-linked ubiquitin chains in vitro. H2AK119Ub and ionizing radiation-induced 'Lys-63'-linked ubiquitination (H2AK13Ub and H2AK15Ub) are distinct events. In terms of processing, acetylation at Lys-6 (H2AXK5ac) by KAT5 component of the NuA4 histone acetyltransferase complex promotes NBN/NBS1 assembly at the sites of DNA damage. Acetylation at Lys-37 increases in S and G2 phases. This modification has been proposed to be important for DNA double-strand break repair. Most abundant in testis, thymus and spleen.

It localises to the nucleus. The protein localises to the chromosome. In terms of biological role, variant histone H2A which replaces conventional H2A in a subset of nucleosomes. Nucleosomes wrap and compact DNA into chromatin, limiting DNA accessibility to the cellular machineries which require DNA as a template. Histones thereby play a central role in transcription regulation, DNA repair, DNA replication and chromosomal stability. DNA accessibility is regulated via a complex set of post-translational modifications of histones, also called histone code, and nucleosome remodeling. Required for checkpoint-mediated arrest of cell cycle progression in response to low doses of ionizing radiation and for efficient repair of DNA double strand breaks (DSBs) specifically when modified by C-terminal phosphorylation. The protein is Histone H2AX of Mus musculus (Mouse).